The sequence spans 504 residues: U3 snoRNP-associated protein-like YAO (504 aa).

The tract at residues 1–120 is disordered; that stretch reads MKYNNEKKKG…DDDDDEDDDE (120 aa). Positions 20-33 are enriched in basic and acidic residues; sequence GSNERDPFFEEEPK. 2 stretches are compositionally biased toward acidic residues: residues 41–54 and 70–81; these read DDDDIESVDSDAEE and EVEDEDEFADET. Positions 89 to 106 are enriched in basic and acidic residues; it reads LAEEMLNRRREAMRRERE. Residues 107–120 are compositionally biased toward acidic residues; it reads EADNDDDDDEDDDE. 7 WD repeats span residues 159 to 198, 220 to 259, 262 to 301, 304 to 342, 344 to 382, 413 to 452, and 456 to 496; these read KHRRSVVSVALSDDDSRGFSASKDGTIMHWDVSSGKTDKY, NHSRESLALAVSSDGRYLATGGVDRHVHIWDVRTREHVQA, GHRNTVSCLCFRYGTSELYSGSFDRTVKVWNVEDKAFITE, GHQGEILAIDALRKERALTVGRDRTMLYHKVPESTRMIY, APASSLESCCFISDNEYLSGSDNGTVALWGMLKKKPVFV, SANSWVNAVATSRGSDLAASGAGNGFVRLWAVETNAIRPL, and PLTG…QNGV.

This sequence belongs to the WD repeat RRP9 family. Expressed in tissues with active in cell division such as shoot apexes, root tips, lateral root primordia, embryos, endosperm, pollen grains and embryo sacs.

The protein localises to the nucleus. The protein resides in the nucleolus. Its function is as follows. Component of a nucleolar small nuclear ribonucleoprotein particle (snoRNP) thought to participate in the processing and modification of pre-ribosomal RNA. Essential for embryogenesis. Plays a critical role in embryo sac development and gametic cell fate. Required for the correct positioning of the first division plane of zygote. May function during early embryogenesis. This chain is U3 snoRNP-associated protein-like YAO, found in Arabidopsis thaliana (Mouse-ear cress).